A 122-amino-acid polypeptide reads, in one-letter code: Alpha-amylase/trypsin inhibitor (122 aa).

5 disulfide bridges follow: Cys6-Cys55, Cys20-Cys44, Cys29-Cys85, Cys45-Cys103, and Cys57-Cys114.

It belongs to the protease inhibitor I6 (cereal trypsin/alpha-amylase inhibitor) family. As to expression, seeds.

It localises to the secreted. May play a protective role against endo- and exogenous hydrolytic activities in the Ragi seeds. In Eleusine coracana (Indian finger millet), this protein is Alpha-amylase/trypsin inhibitor.